We begin with the raw amino-acid sequence, 105 residues long: Replication restart protein PriB (105 aa).

The SSB domain maps to 1 to 102 (MTTNRLVLSG…LHAEQIELID (102 aa)).

The protein belongs to the PriB family. As to quaternary structure, homodimer. Interacts with PriA and DnaT. Component of the replication restart primosome. Primosome assembly occurs via a 'hand-off' mechanism. PriA binds to replication forks, subsequently PriB then DnaT bind; DnaT then displaces ssDNA to generate the helicase loading substrate.

In terms of biological role, involved in the restart of stalled replication forks, which reloads the replicative helicase on sites other than the origin of replication; the PriA-PriB pathway is the major replication restart pathway. During primosome assembly it facilitates complex formation between PriA and DnaT on DNA; stabilizes PriA on DNA. Stimulates the DNA unwinding activity of PriA helicase. The chain is Replication restart protein PriB from Photorhabdus laumondii subsp. laumondii (strain DSM 15139 / CIP 105565 / TT01) (Photorhabdus luminescens subsp. laumondii).